The chain runs to 115 residues: MRTYENIMIVHPDKVADEYNAVVEKFKGVLTDLNANLLKVDEWGVRKLAYPVKKQGRGSYVLTVFEADPTIIDEYERRLRLDEAVIKFQTVLLEKGFVEEAAAAAEEGANAEEEE.

Belongs to the bacterial ribosomal protein bS6 family.

Binds together with bS18 to 16S ribosomal RNA. In Syntrophotalea carbinolica (strain DSM 2380 / NBRC 103641 / GraBd1) (Pelobacter carbinolicus), this protein is Small ribosomal subunit protein bS6.